The sequence spans 912 residues: Multiple C2 and transmembrane domain-containing protein (912 aa).

Positions 1–33 (MSRIQYVDQVDQVELDQQQQPGSSSTVSGSTPP) are enriched in low complexity. 2 disordered regions span residues 1-80 (MSRI…KRAK) and 145-165 (SSEGSSVTHSPRHRSTTIGGS). Residues 38-49 (PHGSPSLQQSQR) show a composition bias toward polar residues. 3 C2 domains span residues 218-337 (QANE…HLQL), 371-493 (RNSK…HLML), and 522-637 (ERYK…TLKD). Ca(2+)-binding residues include Asp252, Asp258, Asp305, Asp307, and Asp313. Asp553, Asp559, Asp605, and Asp607 together coordinate Ca(2+). Helical transmembrane passes span 729–749 (IVACVYGDLETVPLVLLLIIL) and 826–846 (LTWLAVVLLLGAILVLHFVPL). The interval 887-912 (NQYRELPPSAPTDQTRNNPKKKLKGS) is disordered.

It depends on Ca(2+) as a cofactor. As to expression, motor neurons (at protein level).

It localises to the endoplasmic reticulum membrane. Calcium sensor which is essential for the stabilization of normal baseline neurotransmitter release and for the induction and long-term maintenance of presynaptic homeostatic plasticity. This is Multiple C2 and transmembrane domain-containing protein from Drosophila melanogaster (Fruit fly).